A 1468-amino-acid polypeptide reads, in one-letter code: Centrosomal protein of 290 kDa (1468 aa).

7 coiled-coil regions span residues 1–25, 52–121, 172–292, 318–528, 559–592, 627–688, and 736–1441; these read ERQL…VGEK, SLSE…IEQA, KMYE…DEKA, VASK…EAQK, RIIL…ILSR, HTLK…QADN, and IKLK…SEQF. A self-association (with itself or N-terminus) region spans residues 1060-1468; it reads TTGLTVDQVM…QENPVNFPIY (409 aa). The interval 1130–1152 is disordered; that stretch reads LSKDAYSRPSTSGIDSDDHYQRE.

In terms of assembly, part of the tectonic-like complex (also named B9 complex). Interacts with ATF4 via its N-terminal region. Associates with the BBSome complex, interacting (via N-terminus) with BBS4. Interacts with IQCB1/NPHP5; IQCB1 and CEP290/NPHP6 are proposed to form a functional NPHP5-6 module localized to the centrosome. Interacts with NPHP4; the interaction likely requires additional interactors. Interacts with ZNF423, FAM161A, CEP162, CEP162, CEP131, TALPID3, CCDC13, CC2D2A, RPGRIP1. Can self-associate (homo- or heteromeric). Interacts with CCP110; required for suppressing cilia formation. Interacts with RPGR. Associates (via C-terminus) with microtubules; association to microtubule is reduced in response to cellular stress, such as ultraviolet light (UV) radiation or heat shock, in a process that requires p38 MAP kinase signaling. Interacts with FAM161A. Interacts with PCM1. Interacts with CCDC66. Interacts with ARMC9 and CSPP1. Post-translationally, ubiquitinated. May undergo monoubiquitination; monoubiquitination is inhibited in response to cellular stress, such as ultraviolet light (UV) radiation or heat shock, but does not cause its displacement from centriolar satellites.

The protein localises to the cytoplasm. The protein resides in the cytoskeleton. It localises to the microtubule organizing center. Its subcellular location is the centrosome. It is found in the centriolar satellite. The protein localises to the nucleus. The protein resides in the cell projection. It localises to the cilium. Its subcellular location is the cilium basal body. It is found in the centriole. The protein localises to the cytoplasmic vesicle. In terms of biological role, involved in early and late steps in cilia formation. Its association with CCP110 is required for inhibition of primary cilia formation by CCP110. May play a role in early ciliogenesis in the disappearance of centriolar satellites and in the transition of primary ciliar vesicles (PCVs) to capped ciliary vesicles (CCVs). Required for the centrosomal recruitment of RAB8A and for the targeting of centriole satellite proteins to centrosomes such as of PCM1. Required for the correct localization of ciliary and phototransduction proteins in retinal photoreceptor cells; may play a role in ciliary transport processes. Required for efficient recruitment of RAB8A to primary cilium. In the ciliary transition zone is part of the tectonic-like complex which is required for tissue-specific ciliogenesis and may regulate ciliary membrane composition. Involved in regulation of the BBSome complex integrity, specifically for presence of BBS2, BBS5 and BBS8/TTC8 in the complex, and in ciliary targeting of selected BBSome cargos. May play a role in controlling entry of the BBSome complex to cilia possibly implicating IQCB1/NPHP5. Activates ATF4-mediated transcription. This chain is Centrosomal protein of 290 kDa (CEP290), found in Bos taurus (Bovine).